Reading from the N-terminus, the 148-residue chain is 3-dehydroquinate dehydratase (148 aa).

Tyr-22 acts as the Proton acceptor in catalysis. Residues Asn-73, His-79, and Asp-86 each contribute to the substrate site. Residue His-99 is the Proton donor of the active site. Residues 100–101 (LS) and Arg-110 each bind substrate.

The protein belongs to the type-II 3-dehydroquinase family. In terms of assembly, homododecamer.

The enzyme catalyses 3-dehydroquinate = 3-dehydroshikimate + H2O. It participates in metabolic intermediate biosynthesis; chorismate biosynthesis; chorismate from D-erythrose 4-phosphate and phosphoenolpyruvate: step 3/7. In terms of biological role, catalyzes a trans-dehydration via an enolate intermediate. The sequence is that of 3-dehydroquinate dehydratase from Jannaschia sp. (strain CCS1).